The following is a 122-amino-acid chain: Insulin-like 3 (122 aa).

Residues 1–15 form the signal peptide; the sequence is MRAPLLLMLLALGSA. Disulfide bonds link cysteine 29-cysteine 107, cysteine 41-cysteine 120, and cysteine 106-cysteine 111.

This sequence belongs to the insulin family. In terms of assembly, heterodimer of a B chain and an A chain linked by two disulfide bonds. In terms of tissue distribution, expressed exclusively in Leydig cells of the testis.

It localises to the secreted. Its function is as follows. Seems to play a role in testicular function. May be a trophic hormone with a role in testicular descent in fetal life. Is a ligand for LGR8 receptor. This is Insulin-like 3 (Insl3) from Mus musculus (Mouse).